The primary structure comprises 248 residues: Metallo-beta-lactamase type 2 (248 aa).

The first 21 residues, 1 to 21 (MKRLKGLLVLALGFTGLQVFG), serve as a signal peptide directing secretion. Residues H97, H99, D101, H160, and C179 each coordinate Zn(2+). K182 contacts substrate. A Zn(2+)-binding site is contributed by H221.

Belongs to the metallo-beta-lactamase superfamily. Class-B beta-lactamase family. As to quaternary structure, monomer. Requires Zn(2+) as cofactor.

The protein resides in the periplasm. It catalyses the reaction a beta-lactam + H2O = a substituted beta-amino acid. Functionally, confers resistance to the different beta-lactams antibiotics (penicillin, cephalosporin and carbapenem) via the hydrolysis of the beta-lactam ring. The chain is Metallo-beta-lactamase type 2 (blaB6) from Elizabethkingia meningoseptica (Chryseobacterium meningosepticum).